A 580-amino-acid chain; its full sequence is MNIKYLIKKDIEQALIKINSNYTYEVFIISSKKIELGHYQVDNLMKISSRLKIKPYKLFQKILILIEKKKIYKKIIFSHPGFINIFIKNEWLSEKLEIPFISSRLGVKYIYPKKNIVIDYSSPNIAKEMHVGHLRSTIIGDVTVRILEFLGQKVIRANHIGDWGTQFGILIAYLEDKKLLKKLKKNLLSLQDLDNIYCQSKKQYNSNELFSKKSREFVVKLQNGDQYCCAIWKKLVSITMLENYKIYKKLNVTLEEKHTMGESFYNPMLPKIVEDLKKQKIAIEKNGAVIVFLDEFKNRMGDSMGVIIRKKDKGFLYSTTDIACLKYRYQNLHADRIIYYTDSRQYQHLLQSWTIAEKANYISKNLLLEHHMFGMMLSKNRRPFKTRDGNTIKLSNLLNESINRATNLIQKKQPNLCKKKLIKLGEIIGISAVKYSDLSKNRNTNYIFDWDKMLSFEGNTAPYIQYAYTRIISILKKSNIPLHKIKMKIILNEESEINLAIKILEFEEIILLIAKNGTPHIMCKYLYQLSTYFSHFYENCSILFSEKIKIRKSRIKLSFLTAKTIKKGLNLLGIKTIKKM.

The short motif at 123-133 (PNIAKEMHVGH) is the 'HIGH' region element.

Belongs to the class-I aminoacyl-tRNA synthetase family. As to quaternary structure, monomer.

It localises to the cytoplasm. The enzyme catalyses tRNA(Arg) + L-arginine + ATP = L-arginyl-tRNA(Arg) + AMP + diphosphate. The protein is Arginine--tRNA ligase (argS) of Buchnera aphidicola subsp. Schizaphis graminum (strain Sg).